A 589-amino-acid polypeptide reads, in one-letter code: Cytoplasmic polyadenylation element-binding protein 2 (589 aa).

Disordered stretches follow at residues 1-103 and 118-140; these read MPPP…QAAA and PLLK…SMSW. Low complexity predominate over residues 24–33; that stretch reads FFPSFSPVSP. Positions 44-53 are enriched in gly residues; the sequence is SGGGGGGFGG. Positions 60–81 are enriched in pro residues; it reads VPPPPPPAMNIPQQQPPPPAAP. Low complexity-rich tracts occupy residues 82-103 and 130-140; these read QQPQ…QAAA and SSGWGTGSMSW. A Phosphoserine modification is found at Ser89. RRM domains lie at 332–423 and 440–522; these read RKVF…PWNL and KTIF…PYVL.

This sequence belongs to the RRM CPEB family. In terms of assembly, interacts with TENT2/GLD2.

It is found in the cytoplasm. Functionally, may play a role in translational regulation of stored mRNAs in transcriptionally inactive haploid spermatids. Binds to poly(U) RNA oligomers. Required for cell cycle progression, specifically for the transition from metaphase to anaphase. The chain is Cytoplasmic polyadenylation element-binding protein 2 (CPEB2) from Homo sapiens (Human).